A 132-amino-acid chain; its full sequence is VPASDQLTVHVLPARHFSGRGLKRNQTLWASFLFVTPQQKIYYSGDSGYGPHFKAIGDEFGPVDLAIMENGQYDQDWKYIHMMPDETAQAADDLRARAVLPGHAGRSFWRNTAGMNRINGWRLPAKEGPGVC.

It to M.tuberculosis Rv0906.

The protein resides in the cell outer membrane. This Klebsiella pneumoniae protein is Outer membrane protein RomA (romA).